A 346-amino-acid polypeptide reads, in one-letter code: UDP-3-O-acylglucosamine N-acyltransferase (346 aa).

His253 (proton acceptor) is an active-site residue.

Belongs to the transferase hexapeptide repeat family. LpxD subfamily. Homotrimer.

It catalyses the reaction a UDP-3-O-[(3R)-3-hydroxyacyl]-alpha-D-glucosamine + a (3R)-hydroxyacyl-[ACP] = a UDP-2-N,3-O-bis[(3R)-3-hydroxyacyl]-alpha-D-glucosamine + holo-[ACP] + H(+). It participates in bacterial outer membrane biogenesis; LPS lipid A biosynthesis. In terms of biological role, catalyzes the N-acylation of UDP-3-O-acylglucosamine using 3-hydroxyacyl-ACP as the acyl donor. Is involved in the biosynthesis of lipid A, a phosphorylated glycolipid that anchors the lipopolysaccharide to the outer membrane of the cell. This chain is UDP-3-O-acylglucosamine N-acyltransferase, found in Rickettsia conorii (strain ATCC VR-613 / Malish 7).